Here is a 174-residue protein sequence, read N- to C-terminus: MIDGDGFRPNVGIVICNRNGQVLWARRYGQHSWQFPQGGVDDGETPEQAMFRELYEEIGLKQDDVTILATSRNWLKYRLPKRLIRWESKPVCIGQKQKWFLLRLDAAKEACIQFGCHGQPEFDDWRWVSYWYPVRQVVSFKREVYRRVMKEFAAIAMPYLPPVAKKEPRRKGYR.

The Nudix hydrolase domain occupies 6–150 (GFRPNVGIVI…KREVYRRVMK (145 aa)). The Nudix box motif lies at 38 to 59 (GGVDDGETPEQAMFRELYEEIG).

The protein belongs to the Nudix hydrolase family. RppH subfamily. It depends on a divalent metal cation as a cofactor.

Functionally, accelerates the degradation of transcripts by removing pyrophosphate from the 5'-end of triphosphorylated RNA, leading to a more labile monophosphorylated state that can stimulate subsequent ribonuclease cleavage. In Tolumonas auensis (strain DSM 9187 / NBRC 110442 / TA 4), this protein is RNA pyrophosphohydrolase.